We begin with the raw amino-acid sequence, 362 residues long: Tryptophan 2,3-dioxygenase (362 aa).

Residues 40-44 and R111 each bind substrate; that span reads FIIVH. Heme is bound at residue H297. Position 311 (T311) interacts with substrate.

The protein belongs to the tryptophan 2,3-dioxygenase family. In terms of assembly, homotetramer. Heme is required as a cofactor.

It catalyses the reaction L-tryptophan + O2 = N-formyl-L-kynurenine. It participates in amino-acid degradation; L-tryptophan degradation via kynurenine pathway; L-kynurenine from L-tryptophan: step 1/2. In terms of biological role, heme-dependent dioxygenase that catalyzes the oxidative cleavage of the L-tryptophan (L-Trp) pyrrole ring and converts L-tryptophan to N-formyl-L-kynurenine. Catalyzes the oxidative cleavage of the indole moiety. This is Tryptophan 2,3-dioxygenase from Alteromonas mediterranea (strain DSM 17117 / CIP 110805 / LMG 28347 / Deep ecotype).